The chain runs to 3432 residues: Genome polyprotein (3432 aa).

The interval 2–15 is interaction with host EXOC1; sequence TKKPGGPGKNRAIN. The Cytoplasmic portion of the chain corresponds to 2–109; that stretch reads TKKPGGPGKN…KKQNKRGGNE (108 aa). The segment at 37–72 is hydrophobic; homodimerization of capsid protein C; sequence LLDGRGPVRFVLALITFFKFTALAPTKALLGRWRAV. Positions 106-127 are cleaved as a propeptide — ER anchor for the capsid protein C, removed in mature form by serine protease NS3; sequence GGNESSIMWLASLAIVIACAGA. The chain crosses the membrane as a helical span at residues 110 to 130; sequence SSIMWLASLAIVIACAGAMKL. At 131-253 the chain is on the extracellular side; it reads SNFQGKLLMT…ATRYLMKTEN (123 aa). N-linked (GlcNAc...) asparagine; by host glycosylation occurs at Asn-142. The chain crosses the membrane as a helical span at residues 254–274; it reads WIIRNPGYAFLAAALGWMLGS. Residues 275–279 are Cytoplasmic-facing; it reads NSGQR. Residues 280–294 form a helical membrane-spanning segment; that stretch reads VVFTILLLLVAPAYS. The Extracellular segment spans residues 295-746; sequence FNCLGMGNRD…QVFGGAFRTL (452 aa). Intrachain disulfides connect Cys-297/Cys-324, Cys-354/Cys-410, Cys-354/Cys-415, Cys-368/Cys-399, Cys-386/Cys-410, and Cys-386/Cys-415. A fusion peptide region spans residues 392 to 405; it reads DRGWGNGCGLFGKG. Asn-448 carries an N-linked (GlcNAc...) asparagine; by host glycan. 2 disulfide bridges follow: Cys-484–Cys-581 and Cys-598–Cys-629. Residues 747–767 traverse the membrane as a helical segment; sequence FGGMSWITQGLMGALLLWMGV. At 768–773 the chain is on the cytoplasmic side; it reads NARDRS. A helical membrane pass occupies residues 774–794; that stretch reads IALAFLATGGVLVFLATNVHA. The Extracellular segment spans residues 795–1219; it reads DTGCAIDITR…AFAEANSGGD (425 aa). 6 disulfide bridges follow: Cys-798-Cys-809, Cys-849-Cys-937, Cys-973-Cys-1017, Cys-1074-Cys-1123, Cys-1085-Cys-1106, and Cys-1107-Cys-1110. 2 N-linked (GlcNAc...) asparagine; by host glycosylation sites follow: Asn-924 and Asn-1001. A helical membrane pass occupies residues 1220 to 1240; it reads VLHLALIAVFKIQPAFLVMNM. Residues 1241–1250 lie on the Cytoplasmic side of the membrane; that stretch reads LSARWTNQEN. The helical transmembrane segment at 1251–1271 threads the bilayer; sequence MVLVLGAAFFQLASVDLQIGV. Position 1272 (His-1272) is a topological domain, lumenal. A helical transmembrane segment spans residues 1273–1293; the sequence is GILNAAAIAWMIVRAITFPTT. The Cytoplasmic portion of the chain corresponds to 1294–1309; it reads STVAMPVLALLTPGMR. A helical transmembrane segment spans residues 1310–1330; that stretch reads ALYLDTYRIILLVIGICSLLQ. The Lumenal segment spans residues 1331–1341; that stretch reads ERRKTMAKKKG. The chain crosses the membrane as a helical span at residues 1342-1362; that stretch reads AVLLGLALTSTGWFSPTTIAA. The Cytoplasmic segment spans residues 1363–1374; the sequence is GLMVCNPNKKRG. The helical transmembrane segment at 1375–1395 threads the bilayer; that stretch reads WPATEFLSAVGLMFAIVGGLA. At 1396–1398 the chain is on the lumenal side; that stretch reads ELD. A helical transmembrane segment spans residues 1399–1419; the sequence is IESMSIPFMLAGLMAVSYVIS. The Cytoplasmic segment spans residues 1420-1476; sequence GKATDMWLDRAADISWEMEAAITGSSRRLDVKLDDDGDFHLIDDPGVPWKVWLLRMS. Residues 1427–1466 are interacts with and activates NS3 protease; sequence LDRAADISWEMEAAITGSSRRLDVKLDDDGDFHLIDDPGV. The helical intramembrane region spans 1477–1497; sequence CIGLAALTPWAIVPAAFGYWL. Topologically, residues 1498 to 2173 are cytoplasmic; sequence TLKTTKRGGV…RMALEELPDA (676 aa). The Peptidase S7 domain maps to 1505–1682; it reads GGVFWDTPSP…DRQEEPVPDA (178 aa). Active-site charge relay system; for serine protease NS3 activity residues include His-1555, Asp-1579, and Ser-1639. One can recognise a Helicase ATP-binding domain in the interval 1685-1841; it reads PSMLKKRQMT…DSNAPIHDLQ (157 aa). The important for RNA-binding stretch occupies residues 1689–1692; the sequence is KKRQ. 1698–1705 is a binding site for ATP; the sequence is LHPGSGKT. A DEAH box motif is present at residues 1789–1792; the sequence is DEAH. Positions 1852–2017 constitute a Helicase C-terminal domain; it reads GYEWITEYAG…GLVAQLYGPE (166 aa). The residue at position 1893 (Lys-1893) is an N6-acetyllysine; by host. Residues 1950–1969 form a disordered region; sequence NPSPITSASAAQRRGRVGRN. A regulates the ATPase activity of NS3 helicase region spans residues 2168 to 2172; that stretch reads EELPD. A helical transmembrane segment spans residues 2174–2194; the sequence is LETITLIVAITVMTGGFFLLM. Residues 2195–2199 are Lumenal-facing; it reads MQRKG. Residues 2200–2220 constitute an intramembrane region (helical); the sequence is IGKMGLGALVLTLATFFLWAA. Residue Glu-2221 is a topological domain, lumenal. The helical transmembrane segment at 2222-2242 threads the bilayer; the sequence is VPGTKIAGTLLVALLLMVVLI. The Cytoplasmic portion of the chain corresponds to 2243 to 2257; that stretch reads PEPEKQRSQTDNQLA. The chain crosses the membrane as a helical span at residues 2258–2278; it reads VFLICVLTVVGVVAANEYGML. Topologically, residues 2279 to 2311 are lumenal; that stretch reads EKTKADLKSMFGGRTQAPGLTGLPSMALDLRPA. An intramembrane region (helical) is located at residues 2312–2332; sequence TAWALYGGSTVVLTPLLKHLI. The Lumenal segment spans residues 2333 to 2368; that stretch reads TSEYVTTSLASISSQAGSLFVLPRGVPFTDLDLTVG. Residues 2369 to 2389 form a helical membrane-spanning segment; sequence LVFLGCWGQITLTTFLTAMVL. Residues 2390–2444 are Cytoplasmic-facing; sequence VTLHYGYMLPGWQAEALRAAQRRTAAGIMKNAVVDGMVATDVPELERTTPLMQKK. Residues 2445-2465 form a helical membrane-spanning segment; the sequence is VGQVLLIGVSVAAFLVNPNVT. Topologically, residues 2466 to 2469 are lumenal; the sequence is TVRE. A helical transmembrane segment spans residues 2470-2490; the sequence is AGVLVTAATLTLWDNGASAVW. At 2491–3432 the chain is on the cytoplasmic side; it reads NSTTATGLCH…DVLIQEDRVI (942 aa). The mRNA cap 0-1 NS5-type MT domain maps to 2528–2793; it reads GRPGGRTLGE…DVNLGSGTRA (266 aa). Ser-2583 lines the S-adenosyl-L-methionine pocket. The residue at position 2583 (Ser-2583) is a Phosphoserine. The active-site For 2'-O-MTase activity is the Lys-2588. The S-adenosyl-L-methionine site is built by Gly-2613, Trp-2614, Thr-2631, Lys-2632, Asp-2658, and Val-2659. Asp-2673 serves as the catalytic For 2'-O-MTase activity. Residue Ile-2674 coordinates S-adenosyl-L-methionine. Residues Lys-2709 and Glu-2745 each act as for 2'-O-MTase activity in the active site. Tyr-2747 contacts S-adenosyl-L-methionine. The Zn(2+) site is built by Glu-2967, His-2971, Cys-2976, and Cys-2979. In terms of domain architecture, RdRp catalytic spans 3057–3209; it reads GKMYADDTAG…KPLDDRFATA (153 aa). Positions 3244, 3260, and 3379 each coordinate Zn(2+).

This sequence in the N-terminal section; belongs to the class I-like SAM-binding methyltransferase superfamily. mRNA cap 0-1 NS5-type methyltransferase family. Homodimer. Interacts (via N-terminus) with host EXOC1 (via C-terminus); this interaction results in EXOC1 degradation through the proteasome degradation pathway. In terms of assembly, forms heterodimers with envelope protein E in the endoplasmic reticulum and Golgi. As to quaternary structure, homodimer; in the endoplasmic reticulum and Golgi. Interacts with protein prM. Interacts with non-structural protein 1. Interacts with host HSPA5. Homodimer; Homohexamer when secreted. Interacts with envelope protein E. NS1 interacts with NS4B. Interacts with host complement protein CFH; this interaction leads to the degradation of C3. In terms of assembly, interacts (via N-terminus) with serine protease NS3. As to quaternary structure, forms a heterodimer with serine protease NS3. May form homooligomers. Forms a heterodimer with NS2B. Interacts with non-structural protein 2A (via N-terminus). Interacts with NS4B. Interacts with unphosphorylated RNA-directed RNA polymerase NS5; this interaction stimulates RNA-directed RNA polymerase NS5 guanylyltransferase activity. Interacts with host ILF2. In terms of assembly, interacts with serine protease NS3. As to quaternary structure, homodimer. Interacts with host STAT2; this interaction inhibits the phosphorylation of the latter, and, when all viral proteins are present (polyprotein), targets STAT2 for degradation. Interacts with serine protease NS3. Mn(2+) is required as a cofactor. Requires Mg(2+) as cofactor. Specific enzymatic cleavages in vivo yield mature proteins. Cleavages in the lumen of endoplasmic reticulum are performed by host signal peptidase, whereas cleavages in the cytoplasmic side are performed by serine protease NS3. Signal cleavage at the 2K-4B site requires a prior NS3 protease-mediated cleavage at the 4A-2K site. In terms of processing, cleaved in post-Golgi vesicles by a host furin, releasing the mature small envelope protein M, and peptide pr. This cleavage is incomplete as up to 30% of viral particles still carry uncleaved prM. Post-translationally, N-glycosylated. N-glycosylated. The excreted form is glycosylated and this is required for efficient secretion of the protein from infected cells. In terms of processing, acetylated by host KAT5. Acetylation modulates NS3 RNA-binding and unwinding activities and plays an important positive role for viral replication. Post-translationally, phosphorylated on serines residues. This phosphorylation may trigger NS5 nuclear localization.

It is found in the host endoplasmic reticulum membrane. The protein localises to the virion. Its subcellular location is the host nucleus. The protein resides in the host cytoplasm. It localises to the host perinuclear region. It is found in the secreted. The protein localises to the virion membrane. Its subcellular location is the host cell surface. The enzyme catalyses Selective hydrolysis of -Xaa-Xaa-|-Yaa- bonds in which each of the Xaa can be either Arg or Lys and Yaa can be either Ser or Ala.. The catalysed reaction is a ribonucleoside 5'-triphosphate + H2O = a ribonucleoside 5'-diphosphate + phosphate + H(+). It carries out the reaction RNA(n) + a ribonucleoside 5'-triphosphate = RNA(n+1) + diphosphate. It catalyses the reaction ATP + H2O = ADP + phosphate + H(+). The enzyme catalyses a 5'-end (5'-triphosphoguanosine)-ribonucleoside in mRNA + S-adenosyl-L-methionine = a 5'-end (N(7)-methyl 5'-triphosphoguanosine)-ribonucleoside in mRNA + S-adenosyl-L-homocysteine. The catalysed reaction is a 5'-end (N(7)-methyl 5'-triphosphoguanosine)-ribonucleoside in mRNA + S-adenosyl-L-methionine = a 5'-end (N(7)-methyl 5'-triphosphoguanosine)-(2'-O-methyl-ribonucleoside) in mRNA + S-adenosyl-L-homocysteine + H(+). Its function is as follows. Plays a role in virus budding by binding to the cell membrane and gathering the viral RNA into a nucleocapsid that forms the core of a mature virus particle. During virus entry, may induce genome penetration into the host cytoplasm after hemifusion induced by the surface proteins. Can migrate to the cell nucleus where it modulates host functions. Overcomes the anti-viral effects of host EXOC1 by sequestering and degrading the latter through the proteasome degradation pathway. Functionally, inhibits RNA silencing by interfering with host Dicer. In terms of biological role, prevents premature fusion activity of envelope proteins in trans-Golgi by binding to envelope protein E at pH6.0. After virion release in extracellular space, gets dissociated from E dimers. Acts as a chaperone for envelope protein E during intracellular virion assembly by masking and inactivating envelope protein E fusion peptide. prM is the only viral peptide matured by host furin in the trans-Golgi network probably to avoid catastrophic activation of the viral fusion activity in acidic Golgi compartment prior to virion release. prM-E cleavage is inefficient, and many virions are only partially matured. These uncleaved prM would play a role in immune evasion. Its function is as follows. May play a role in virus budding. Exerts cytotoxic effects by activating a mitochondrial apoptotic pathway through M ectodomain. May display a viroporin activity. Functionally, binds to host cell surface receptor and mediates fusion between viral and cellular membranes. Efficient virus attachment to cell is, at least in part, mediated by host HSPA5. Envelope protein is synthesized in the endoplasmic reticulum in the form of heterodimer with protein prM. They play a role in virion budding in the ER, and the newly formed immature particle is covered with 60 spikes composed of heterodimer between precursor prM and envelope protein E. The virion is transported to the Golgi apparatus where the low pH causes dissociation of PrM-E heterodimers and formation of E homodimers. prM-E cleavage is inefficient, and many virions are only partially matured. These uncleaved prM would play a role in immune evasion. In terms of biological role, involved in immune evasion, pathogenesis and viral replication. Once cleaved off the polyprotein, is targeted to three destinations: the viral replication cycle, the plasma membrane and the extracellular compartment. Essential for viral replication. Required for formation of the replication complex and recruitment of other non-structural proteins to the ER-derived membrane structures. Excreted as a hexameric lipoparticle that plays a role against host immune response. Antagonizing the complement function. Binds to the host macrophages and dendritic cells. Inhibits signal transduction originating from Toll-like receptor 3 (TLR3). Component of the viral RNA replication complex that functions in virion assembly and antagonizes the host alpha/beta interferon antiviral response. Its function is as follows. Required cofactor for the serine protease function of NS3. May have membrane-destabilizing activity and form viroporins. Functionally, displays three enzymatic activities: serine protease, NTPase and RNA helicase. NS3 serine protease, in association with NS2B, performs its autocleavage and cleaves the polyprotein at dibasic sites in the cytoplasm: C-prM, NS2A-NS2B, NS2B-NS3, NS3-NS4A, NS4A-2K and NS4B-NS5. NS3 RNA helicase binds RNA and unwinds dsRNA in the 3' to 5' direction. In terms of biological role, regulates the ATPase activity of the NS3 helicase activity. NS4A allows NS3 helicase to conserve energy during unwinding. Functions as a signal peptide for NS4B and is required for the interferon antagonism activity of the latter. Its function is as follows. Induces the formation of ER-derived membrane vesicles where the viral replication takes place. Inhibits interferon (IFN)-induced host STAT1 phosphorylation and nuclear translocation, thereby preventing the establishment of cellular antiviral state by blocking the IFN-alpha/beta pathway. Inhibits STAT2 translocation in the nucleus after IFN-alpha treatment. Functionally, replicates the viral (+) and (-) RNA genome. Performs the capping of genomes in the cytoplasm. NS5 methylates viral RNA cap at guanine N-7 and ribose 2'-O positions. Besides its role in RNA genome replication, also prevents the establishment of cellular antiviral state by blocking the interferon-alpha/beta (IFN-alpha/beta) signaling pathway. Inhibits host TYK2 and STAT2 phosphorylation, thereby preventing activation of JAK-STAT signaling pathway. The polypeptide is Genome polyprotein (Japanese encephalitis virus (strain M28) (JEV)).